Reading from the N-terminus, the 143-residue chain is Transcriptional regulator MraZ (143 aa).

SpoVT-AbrB domains lie at 5 to 47 and 76 to 119; these read EYFH…PVSA and ASNQ…DKEK.

It belongs to the MraZ family. As to quaternary structure, forms oligomers.

The protein localises to the cytoplasm. It localises to the nucleoid. This is Transcriptional regulator MraZ from Finegoldia magna (strain ATCC 29328 / DSM 20472 / WAL 2508) (Peptostreptococcus magnus).